The following is a 212-amino-acid chain: Outer-membrane lipoprotein LolB (212 aa).

A signal peptide spans M1–G16. C17 carries N-palmitoyl cysteine lipidation. C17 carries S-diacylglycerol cysteine lipidation.

The protein belongs to the LolB family. Monomer.

The protein localises to the cell outer membrane. Its function is as follows. Plays a critical role in the incorporation of lipoproteins in the outer membrane after they are released by the LolA protein. The sequence is that of Outer-membrane lipoprotein LolB from Nitrosomonas europaea (strain ATCC 19718 / CIP 103999 / KCTC 2705 / NBRC 14298).